Consider the following 421-residue polypeptide: Aspartokinase (421 aa).

An ATP-binding site is contributed by 7 to 10; it reads KYGG. 25 to 30 contributes to the substrate binding site; that stretch reads RIVATK. Serine 41 contributes to the ATP binding site. Residues 45–49, glutamate 74, 125–126, 151–154, and serine 154 contribute to the substrate site; these read DTTDD, LE, and RGGS. ATP is bound by residues 174–175, 180–185, and lysine 210; these read TD and FSADPR. ACT domains are found at residues 267-348 and 349-421; these read VTIV…GKVS and LIGA…GTGR. Residues aspartate 274, 274 to 279, 292 to 294, glutamine 298, 360 to 361, 374 to 375, and 381 to 382 each bind substrate; these read DIPGYA, NID, VT, NI, and SE.

The protein belongs to the aspartokinase family. Heterotetramer consisting of 2 isoforms Alpha (catalytic and regulation) and of a homodimer of 2 isoforms Beta (regulation).

It catalyses the reaction L-aspartate + ATP = 4-phospho-L-aspartate + ADP. Its pathway is amino-acid biosynthesis; L-lysine biosynthesis via DAP pathway; (S)-tetrahydrodipicolinate from L-aspartate: step 1/4. It participates in amino-acid biosynthesis; L-methionine biosynthesis via de novo pathway; L-homoserine from L-aspartate: step 1/3. The protein operates within amino-acid biosynthesis; L-threonine biosynthesis; L-threonine from L-aspartate: step 1/5. With respect to regulation, feedback inhibition by lysine and threonine. Functionally, catalyzes the phosphorylation of the beta-carboxyl group of aspartic acid with ATP to yield 4-phospho-L-aspartate, which is involved in the branched biosynthetic pathway leading to the biosynthesis of amino acids lysine, threonine, isoleucine and methionine. In Mycobacterium bovis (strain ATCC BAA-935 / AF2122/97), this protein is Aspartokinase (ask).